Here is a 368-residue protein sequence, read N- to C-terminus: Ethanol acetyltransferase 1 (368 aa).

Residues 1 to 21 (MFLSLRPSLSVSRLAVVRRAY) constitute a mitochondrion transit peptide. The AB hydrolase-1 domain maps to 67 to 171 (PIIFFHGLLG…IIDNAPEPQP (105 aa)). Residues serine 140, aspartate 164, and histidine 315 each act as charge relay system in the active site. The segment at 344–368 (RNKDPNNYMQTQNSISNSDTMGQSL) is disordered. The span at 348–368 (PNNYMQTQNSISNSDTMGQSL) shows a compositional bias: polar residues.

The protein belongs to the AB hydrolase superfamily.

The protein localises to the mitochondrion. It carries out the reaction ethanol + acetyl-CoA = ethyl acetate + CoA. The enzyme catalyses acetyl-CoA + H2O = acetate + CoA + H(+). The catalysed reaction is ethyl acetate + H2O = ethanol + acetate + H(+). Its function is as follows. Alcohol acetyltransferase that catalyzes the synthesis of ethyl acetate from ethanol and acetyl-CoA. Can also function as a thioesterase by hydrolyzing acetyl-CoA in the absence of ethanol, as well as esterase hydrolyzing ethyl acetate. This chain is Ethanol acetyltransferase 1 (EAT1), found in Kluyveromyces lactis (strain ATCC 8585 / CBS 2359 / DSM 70799 / NBRC 1267 / NRRL Y-1140 / WM37) (Yeast).